We begin with the raw amino-acid sequence, 90 residues long: Mucin-like protein 1 (90 aa).

The first 20 residues, 1–20, serve as a signal peptide directing secretion; sequence MKFLAVLVLLGVSIFLVSAQ. 14 O-linked (GalNAc...) threonine glycosylation sites follow: threonine 23, threonine 24, threonine 30, threonine 34, threonine 46, threonine 47, threonine 51, threonine 52, threonine 54, threonine 55, threonine 59, threonine 60, threonine 62, and threonine 63. Composition is skewed to low complexity over residues 25–36 and 44–68; these read AAPADTYPATGP and AETT…ASTT. The disordered stretch occupies residues 25–68; that stretch reads AAPADTYPATGPADDEAPDAETTAAATTATTAAPTTATTAASTT. Repeat copies occupy residues 46–53, 54–61, and 62–69. The segment at 46-69 is 3 X 8 AA tandem repeat of T-T-A-A-[APS]-T-T-A; sequence TTAAATTATTAAPTTATTAASTTA. Serine 66 carries an O-linked (GalNAc...) serine glycan. O-linked (GalNAc...) threonine glycosylation is found at threonine 67 and threonine 68.

O-glycosylated. Expressed in mammary, salivary glands and prostate. Also detected in lung. Mainly expressed in cancer cell lines of breast origin. Highly expressed in lymph node-positive compared with node-negative tumors. Detected in all lymph node containing metastatic cells.

It localises to the secreted. The protein localises to the membrane. Functionally, may play a role as marker for the diagnosis of metastatic breast cancer. The protein is Mucin-like protein 1 (MUCL1) of Homo sapiens (Human).